Consider the following 297-residue polypeptide: Probable esterase afoC (297 aa).

The Charge relay system role is filled by serine 136. The span at 204–217 (ASSSASASVSGSES) shows a compositional bias: low complexity. Residues 204–226 (ASSSASASVSGSESAGEEEEDGH) are disordered. Residues aspartate 240 and histidine 267 each act as charge relay system in the active site.

The protein belongs to the LovG family.

Its function is as follows. Probable esterase; part of the gene cluster that mediates the biosynthesis of asperfuranone, a probable antitumor agent. The polyketide synthase afoG is responsible for producing the 3,5-dimethyloctadienone moiety from acetyl-CoA, three malonyl-CoA, and two S-adenosyl methionines (SAM). The 3,5-dimethyloctadienone moiety is then loaded onto the SAT domain of afoE and extended with four malonyl-CoA and one SAM, which leads to the formation of 2,4-dihydroxy-6-(5,7-dimethyl-2-oxo-trans-3-trans-5-nonadienyl)-3-methylbenzaldehyde (compound 2) after reductive release and aldol condensation. AfoD is the next enzyme in the biosynthesis sequence and hydroxylates the side chain at the benzylic position of compound 2. After benzylic hydroxylation, a furan ring is formed after five-member ring hemiacetal formation and water elimination. AfoF and afoC are proposed to oxidize the R-diketone proton and to reduce the unconjugated carbonyl group, respectively, to generate asperfuranone. Since no intermediates could be isolated from afoF and afoC deletants, the sequence of these two enzymes is not fully understood. Moreover, since afoC deletant still produces a small amount of asperfuranone, other endogenous oxidoreductases might catalyze the same reaction with much less efficiency. This is Probable esterase afoC from Emericella nidulans (strain FGSC A4 / ATCC 38163 / CBS 112.46 / NRRL 194 / M139) (Aspergillus nidulans).